The chain runs to 270 residues: UPF0354 protein BC_4690 (270 aa).

It belongs to the UPF0354 family.

The sequence is that of UPF0354 protein BC_4690 from Bacillus cereus (strain ATCC 14579 / DSM 31 / CCUG 7414 / JCM 2152 / NBRC 15305 / NCIMB 9373 / NCTC 2599 / NRRL B-3711).